We begin with the raw amino-acid sequence, 535 residues long: Heparanase (535 aa).

The first 27 residues, 1–27, serve as a signal peptide directing secretion; the sequence is MLRLLLLWLWGPLGALAQGAPAGTAPT. Heparan sulfate group-binding positions include 54 to 56 and Thr89; that span reads DAS. A propeptide spans 102–149 (linker peptide); the sequence is PTSEERSYWKSQVNHDICRSEPVSAAVLRKLQVEWPFQELLLLREQYQ. Cys119 and Cys171 are oxidised to a cystine. 150-154 serves as a coordination point for heparan sulfate group; that stretch reads KEFKN. N-linked (GlcNAc...) asparagine glycans are attached at residues Asn192 and Asn209. The active-site Proton donor is Glu217. Heparan sulfate group-binding positions include 262–272, His288, and Arg295; that span reads QPRGKTVKLLR. The segment at 280 to 409 is required for heterodimerization with the heparanase 8 kDa subunit; sequence EVIDSLTWHH…LLFKKLVGPR (130 aa). Glu335 functions as the Nucleophile in the catalytic mechanism. Heparan sulfate group is bound by residues 340–342 and 381–383; these read YGG and GNY. An intrachain disulfide couples Cys429 to Cys534. Asn451 is a glycosylation site (N-linked (GlcNAc...) asparagine). The segment at 519–535 is required for transferring proheparanase to the Golgi apparatus, secretion and subsequent enzyme activity and for enhancement of PKB/AKT1 phosphorylation; that stretch reads FSYGFFVIRNAKIAACI.

Belongs to the glycosyl hydrolase 79 family. As to quaternary structure, heterodimer; heterodimer formation between the 8 kDa and the 50 kDa subunits is required for enzyme activity. Interacts with TF; the interaction, inhibited by heparin, enhances the generation of activated factor X and activates coagulation. Interacts with HRG; the interaction is enhanced at acidic pH, partially inhibits binding of HPSE to cell surface receptors and modulates its enzymatic activity. Interacts with SDC1; the interaction enhances the shedding of SDC1. Interacts with HPSE2. In terms of processing, proteolytically processed. The cleavage of the 65 kDa form leads to the generation of a linker peptide, and the 8 kDa and 50 kDa products. The active form, the 8/50 kDa heterodimer, is resistant to degradation. Complete removal of the linker peptide appears to be a prerequisite to the complete activation of the enzyme. N-glycosylated. Glycosylation of the 50 kDa subunit appears to be essential for its solubility. In terms of tissue distribution, expressed in skin, mainly in the stratum granulosum and the first layer of the stratum corneum in the upper part of the epidermis. Also detected in hair follicles and in sebaceous glands.

It is found in the lysosome membrane. Its subcellular location is the secreted. The protein localises to the nucleus. The enzyme catalyses endohydrolysis of (1-&gt;4)-beta-D-glycosidic bonds of heparan sulfate chains in heparan sulfate proteoglycan.. Its activity is regulated as follows. Inhibited by EDTA and activated by calcium and magnesium. Inhibited by laminarin sulfate and, to a lower extent, by heparin and sulfamin. Endoglycosidase that cleaves heparan sulfate proteoglycans (HSPGs) into heparan sulfate side chains and core proteoglycans. Participates in extracellular matrix (ECM) degradation and remodeling. Selectively cleaves the linkage between a glucuronic acid unit and an N-sulfo glucosamine unit carrying either a 3-O-sulfo or a 6-O-sulfo group. Can also cleave the linkage between a glucuronic acid unit and an N-sulfo glucosamine unit carrying a 2-O-sulfo group, but not linkages between a glucuronic acid unit and a 2-O-sulfated iduronic acid moiety. It is essentially inactive at neutral pH but becomes active under acidic conditions such as during tumor invasion and in inflammatory processes. Facilitates cell migration associated with metastasis, wound healing and inflammation. Enhances shedding of syndecans, and increases endothelial invasion and angiogenesis in myelomas. Acts as a procoagulant by increasing the generation of activation factor X in the presence of tissue factor and activation factor VII. Increases cell adhesion to the extracellular matrix (ECM), independent of its enzymatic activity. Induces AKT1/PKB phosphorylation via lipid rafts increasing cell mobility and invasion. Heparin increases this AKT1/PKB activation. Regulates osteogenesis. Enhances angiogenesis through up-regulation of SRC-mediated activation of VEGF. Implicated in hair follicle inner root sheath differentiation and hair homeostasis. This Mus musculus (Mouse) protein is Heparanase (Hpse).